Reading from the N-terminus, the 63-residue chain is Large ribosomal subunit protein uL30 (63 aa).

Belongs to the universal ribosomal protein uL30 family. In terms of assembly, part of the 50S ribosomal subunit.

This chain is Large ribosomal subunit protein uL30, found in Hahella chejuensis (strain KCTC 2396).